An 81-amino-acid polypeptide reads, in one-letter code: Protein Vpu (81 aa).

Residues 1-7 (MQPLVIA) lie on the Extracellular side of the membrane. Residues 8-28 (AIVALVVAGIIAIVVWSIVFI) traverse the membrane as a helical segment. Topologically, residues 29–81 (EYRKIRRQRKIDKLIDRISERAEDSGNESEGDQEELSALVGMGHDAPWVINDL) are cytoplasmic. Ser-53 and Ser-57 each carry phosphoserine; by host CK2.

Belongs to the HIV-1 VPU protein family. In terms of assembly, homopentamer. Interacts with host CD4 and BRTC; these interactions induce proteasomal degradation of CD4. Interacts with host BST2; this interaction leads to the degradation of host BST2. Interacts with host FBXW11. Interacts with host AP1M1; this interaction plays a role in the mistrafficking and subsequent degradation of host BST2. Interacts with host RANBP2; this interaction allows Vpu to down-regulate host BLM sumoylation. Post-translationally, phosphorylated by host CK2. This phosphorylation is necessary for interaction with human BTRC and degradation of CD4.

It is found in the host membrane. Its activity is regulated as follows. Ion channel activity is inhibited by hexamethylene amiloride in vitro. Its function is as follows. Enhances virion budding by targeting host CD4 and Tetherin/BST2 to proteasome degradation. Degradation of CD4 prevents any unwanted premature interactions between viral Env and its host receptor CD4 in the endoplasmic reticulum. Degradation of antiretroviral protein Tetherin/BST2 is important for virion budding, as BST2 tethers new viral particles to the host cell membrane. Mechanistically, Vpu bridges either CD4 or BST2 to BTRC, a substrate recognition subunit of the Skp1/Cullin/F-box protein E3 ubiquitin ligase, induces their ubiquitination and subsequent proteasomal degradation. The alteration of the E3 ligase specificity by Vpu seems to promote the degradation of host IKBKB, leading to NF-kappa-B down-regulation and subsequent apoptosis. Acts as a viroporin that forms an oligomeric ion channel in membranes. Modulates the host DNA repair mechanisms to promote degradation of nuclear viral cDNA in cells that are already productively infected in order to suppress immune sensing and proviral hyper-integration (superinfection). Manipulates PML-NBs and modulates SUMOylation of host BLM protein thereby enhancing its DNA-end processing activity toward viral unintegrated linear DNA. Also inhibits RAD52-mediated homologous repair of viral cDNA, preventing the generation of dead-end circular forms of single copies of the long terminal repeat and permitting sustained nucleolytic attack. This is Protein Vpu from Homo sapiens (Human).